Here is a 178-residue protein sequence, read N- to C-terminus: Gluconokinase (178 aa).

ATP is bound at residue 19-26; it reads GVSGTGKT.

The protein belongs to the gluconokinase GntK/GntV family. In terms of assembly, monomer.

It catalyses the reaction D-gluconate + ATP = 6-phospho-D-gluconate + ADP + H(+). It participates in carbohydrate acid metabolism; D-gluconate degradation. Activated by magnesium. Its function is as follows. Phosphorylates gluconate to 6-phosphogluconate. The sequence is that of Gluconokinase from Gluconobacter oxydans (strain 621H) (Gluconobacter suboxydans).